Here is a 346-residue protein sequence, read N- to C-terminus: D-fructose 1,6-bisphosphatase class 2/sedoheptulose 1,7-bisphosphatase 1 (346 aa).

Mn(2+)-binding residues include Asp-33, Glu-57, Asp-97, and Glu-100. Substrate is bound by residues 100–102 (EGT), Tyr-131, 176–178 (RAR), and 198–200 (DGD). Glu-225 lines the Mn(2+) pocket.

It belongs to the FBPase class 2 family. Homotetramer. Requires Mn(2+) as cofactor.

The enzyme catalyses beta-D-fructose 1,6-bisphosphate + H2O = beta-D-fructose 6-phosphate + phosphate. The catalysed reaction is D-sedoheptulose 1,7-bisphosphate + H2O = D-sedoheptulose 7-phosphate + phosphate. Its pathway is carbohydrate biosynthesis; Calvin cycle. Catalyzes the hydrolysis of fructose 1,6-bisphosphate (Fru 1,6-P2) and sedoheptulose 1,7-bisphosphate (Sed 1,7-P2) to fructose 6-phosphate and sedoheptulose 7-phosphate, respectively. The polypeptide is D-fructose 1,6-bisphosphatase class 2/sedoheptulose 1,7-bisphosphatase 1 (Acaryochloris marina (strain MBIC 11017)).